Consider the following 731-residue polypeptide: MMRDSPSIQGTLDAATQHALLAGRHADPFSVLGPHQAGAHTVVRVLAPGARTVMAVLPGGQRTPLLPMQPGLFENTVPGLQPGAPAAYRLCIEWEGGIQHTADPYAFGPVLDAAQLDHCAAGGWRYLAGLLGAHAASVDGCAGTRFALWAPNARRVAVVGDFNGWDGRRHAMRLRYPAGVWELFLPDVGPGARYKFQVLGADGHTVLKADPLARQAEAPPATASIVPDERPFAWTDKAWMEQRAARQRCDAPISIYEVHAGSWFDDAGAPRWQNLAARLPEYARSLGFTHIELLPVMAHPFGGSWGYQPLGLFAPAAAHGAPADFAHFVDRCHEAGLGVILDWVPAHFPDDAHGLARLDGTPLYEHADPREGRHPDWNTLIYNYGRREVRTFLIASAIHWLRHYHVDGLRVDAVASMLYRDYSRPAGQWIPNRHGRRENLEAIDFLRELNAAVGVQCPGAITVAEESTAWPGVTAPVANGGLGFDYKWNMGWMHDTLRYMRRDPIHRRHHHHDLSFGMVYAYAERFVLPLSHDEVVHGKGSLLGKMPGERAAQLAQLRLYYAFMWAHPGKKLLFMGGEFGQQGEWNHDAMLQWSLLDDPAHRGLQRLVADLNHVYATLPELHCRDADPSGFAWIVGDDADNSVLAFARVDASHCLVAVCNFTPVPRPGYRFGVPHAGDWRVRVDTGATRYGGAGGGPPICLRSEPIPAHGHPQSLVLDLPGFTALYLRHSE.

Asp-412 acts as the Nucleophile in catalysis. Catalysis depends on Glu-465, which acts as the Proton donor.

It belongs to the glycosyl hydrolase 13 family. GlgB subfamily. As to quaternary structure, monomer.

The catalysed reaction is Transfers a segment of a (1-&gt;4)-alpha-D-glucan chain to a primary hydroxy group in a similar glucan chain.. Its pathway is glycan biosynthesis; glycogen biosynthesis. Its function is as follows. Catalyzes the formation of the alpha-1,6-glucosidic linkages in glycogen by scission of a 1,4-alpha-linked oligosaccharide from growing alpha-1,4-glucan chains and the subsequent attachment of the oligosaccharide to the alpha-1,6 position. In Bordetella pertussis (strain Tohama I / ATCC BAA-589 / NCTC 13251), this protein is 1,4-alpha-glucan branching enzyme GlgB.